An 80-amino-acid chain; its full sequence is ATP synthase subunit c (80 aa).

A run of 2 helical transmembrane segments spans residues 8-28 (MIYF…AIGI) and 55-75 (IVMG…LYLI).

The protein belongs to the ATPase C chain family. As to quaternary structure, F-type ATPases have 2 components, F(1) - the catalytic core - and F(0) - the membrane proton channel. F(1) has five subunits: alpha(3), beta(3), gamma(1), delta(1), epsilon(1). F(0) has three main subunits: a(1), b(2) and c(10-14). The alpha and beta chains form an alternating ring which encloses part of the gamma chain. F(1) is attached to F(0) by a central stalk formed by the gamma and epsilon chains, while a peripheral stalk is formed by the delta and b chains.

The protein localises to the cell inner membrane. Its function is as follows. F(1)F(0) ATP synthase produces ATP from ADP in the presence of a proton or sodium gradient. F-type ATPases consist of two structural domains, F(1) containing the extramembraneous catalytic core and F(0) containing the membrane proton channel, linked together by a central stalk and a peripheral stalk. During catalysis, ATP synthesis in the catalytic domain of F(1) is coupled via a rotary mechanism of the central stalk subunits to proton translocation. Functionally, key component of the F(0) channel; it plays a direct role in translocation across the membrane. A homomeric c-ring of between 10-14 subunits forms the central stalk rotor element with the F(1) delta and epsilon subunits. This is ATP synthase subunit c from Aeromonas salmonicida (strain A449).